A 199-amino-acid chain; its full sequence is Probable adenine phosphoribosyltransferase (199 aa).

It belongs to the purine/pyrimidine phosphoribosyltransferase family. Homodimer.

The protein resides in the cytoplasm. It catalyses the reaction AMP + diphosphate = 5-phospho-alpha-D-ribose 1-diphosphate + adenine. It participates in purine metabolism; AMP biosynthesis via salvage pathway; AMP from adenine: step 1/1. Catalyzes a salvage reaction resulting in the formation of AMP, that is energically less costly than de novo synthesis. The sequence is that of Probable adenine phosphoribosyltransferase (aprt) from Dictyostelium discoideum (Social amoeba).